The following is a 361-amino-acid chain: Small ribosomal subunit protein mS46 (361 aa).

The transit peptide at 1–14 (MRSSMFRCVSRAHY) directs the protein to the mitochondrion. The tract at residues 37–99 (ASSNALKLDK…SDSVRANKQQ (63 aa)) is disordered. Positions 43-52 (KLDKMKEGRM) are enriched in basic and acidic residues. The segment covering 59–68 (GNQNRNSMNN) has biased composition (low complexity). Residues 69 to 91 (KESRGREGNQGERNMRLKNRSSD) show a composition bias toward basic and acidic residues.

It belongs to the mitochondrion-specific ribosomal protein mS46 family. Component of the mitochondrial small ribosomal subunit (mt-SSU). Mature yeast 74S mitochondrial ribosomes consist of a small (37S) and a large (54S) subunit. The 37S small subunit contains a 15S ribosomal RNA (15S mt-rRNA) and 34 different proteins. The 54S large subunit contains a 21S rRNA (21S mt-rRNA) and 46 different proteins.

The protein resides in the mitochondrion. Functionally, component of the mitochondrial ribosome (mitoribosome), a dedicated translation machinery responsible for the synthesis of mitochondrial genome-encoded proteins, including at least some of the essential transmembrane subunits of the mitochondrial respiratory chain. The mitoribosomes are attached to the mitochondrial inner membrane and translation products are cotranslationally integrated into the membrane. The polypeptide is Small ribosomal subunit protein mS46 (RSM28) (Saccharomyces cerevisiae (strain ATCC 204508 / S288c) (Baker's yeast)).